Here is a 71-residue protein sequence, read N- to C-terminus: Exodeoxyribonuclease 7 small subunit (71 aa).

The protein belongs to the XseB family. As to quaternary structure, heterooligomer composed of large and small subunits.

It is found in the cytoplasm. The enzyme catalyses Exonucleolytic cleavage in either 5'- to 3'- or 3'- to 5'-direction to yield nucleoside 5'-phosphates.. Bidirectionally degrades single-stranded DNA into large acid-insoluble oligonucleotides, which are then degraded further into small acid-soluble oligonucleotides. This chain is Exodeoxyribonuclease 7 small subunit, found in Endomicrobium trichonymphae.